A 905-amino-acid chain; its full sequence is FIGNL1-interacting regulator of recombination and mitosis (905 aa).

Residues Ser101 and Ser796 each carry the phosphoserine modification. Lys845 is subject to N6-acetyllysine.

As to quaternary structure, interacts (via its N-terminal region) with PLK1; controls PLK1 kinase activity. Interacts (via the KVVXF motif) with PPP1CC; controls PLK1 kinase activity. Interacts with FIGNL1; may regulate homologous recombination. Post-translationally, phosphorylation at Ser-101 by PLK1 strengthens FIRRM-PLK1 interaction. Phosphorylation at Ser-796 by PLK1 negatively regulates its interaction with PPP1CC.

It is found in the chromosome. Its subcellular location is the centromere. The protein localises to the kinetochore. It localises to the nucleus. The protein resides in the midbody. It is found in the cytoplasm. Its subcellular location is the cytoskeleton. The protein localises to the spindle. Functionally, regulates PLK1 kinase activity at kinetochores and promotes faithful chromosome segregation in prometaphase by bridging kinase and phosphatase activities. Phosphorylation of FIRRM by PLK1 negatively regulates its interaction with the phosphatase, PPP1CC, thus creating a negative feedback loop for maintaining proper PLK1 kinase activity during mitosis. In complex with FIGL1 may regulate homologous recombination. In Rattus norvegicus (Rat), this protein is FIGNL1-interacting regulator of recombination and mitosis.